The primary structure comprises 377 residues: MALNHTALPQDERLPHYLRDEDPFASKLSWEADLVAGFYLTIIGILSTFGNGYVLYMSSRRKKKLRPAEIMTINLAVCDLGISVVGKPFTIISCFCHRWVFGWFGCRWYGWAGFFFGCGSLITMTAVSLDRYLKICYLSYGVWLKRKHAYICLAVIWAYASFWTTMPLVGLGDYAPEPFGTSCTLDWWLAQASGGGQVFILSILFFCLLLPTAVIVFSYAKIIAKVKSSSKEVAHFDSRIHSSHVLEVKLTKVAMLICAGFLIAWIPYAVVSVWSAFGRPDSIPIQLSVVPTLLAKSAAMYNPIIYQVIDYRFACCQAGGLRGTKKKSLEDFRLHTVTAVRKSSAVLEIHPESSSRFTSAHVMDGESHSNDGDCGKK.

The Extracellular portion of the chain corresponds to 1–33; the sequence is MALNHTALPQDERLPHYLRDEDPFASKLSWEAD. N-linked (GlcNAc...) asparagine glycosylation is present at Asn4. A helical membrane pass occupies residues 34 to 54; it reads LVAGFYLTIIGILSTFGNGYV. The Cytoplasmic portion of the chain corresponds to 55 to 74; that stretch reads LYMSSRRKKKLRPAEIMTIN. Residues 75–95 traverse the membrane as a helical segment; sequence LAVCDLGISVVGKPFTIISCF. Residues 96 to 108 lie on the Extracellular side of the membrane; sequence CHRWVFGWFGCRW. Cys106 and Cys183 are oxidised to a cystine. The helical transmembrane segment at 109–129 threads the bilayer; that stretch reads YGWAGFFFGCGSLITMTAVSL. The Cytoplasmic segment spans residues 130–150; the sequence is DRYLKICYLSYGVWLKRKHAY. Residues 151–171 form a helical membrane-spanning segment; it reads ICLAVIWAYASFWTTMPLVGL. Residues 172-197 are Extracellular-facing; that stretch reads GDYAPEPFGTSCTLDWWLAQASGGGQ. Residues 198–218 traverse the membrane as a helical segment; it reads VFILSILFFCLLLPTAVIVFS. The Cytoplasmic segment spans residues 219 to 252; the sequence is YAKIIAKVKSSSKEVAHFDSRIHSSHVLEVKLTK. Residues 253–273 form a helical membrane-spanning segment; that stretch reads VAMLICAGFLIAWIPYAVVSV. Over 274–288 the chain is Extracellular; that stretch reads WSAFGRPDSIPIQLS. Residues 289-309 traverse the membrane as a helical segment; sequence VVPTLLAKSAAMYNPIIYQVI. At Lys296 the chain carries N6-(retinylidene)lysine. The Cytoplasmic portion of the chain corresponds to 310–377; the sequence is DYRFACCQAG…HSNDGDCGKK (68 aa). S-palmitoyl cysteine attachment occurs at residues Cys315 and Cys316. The interval 357 to 377 is disordered; sequence FTSAHVMDGESHSNDGDCGKK. Residues 363–377 show a composition bias toward basic and acidic residues; the sequence is MDGESHSNDGDCGKK.

It belongs to the G-protein coupled receptor 1 family. Opsin subfamily. In terms of processing, it is uncertain whether Cys-315 or Cys-316 is palmitoylated. Expressed in the brain (at protein level). Weakly expressed in the skin and liver (at protein level). Abundantly expressed in striated muscle cells. Expressed in Math7/Atok7-dependent retinal ganglion cells in the ganglion cell layer (at protein level). Additionally expressed in horizontal and amacrine cells in the inner nuclear layer of the retina (at protein level). Expressed around the base of hair follicles and in epidermal and sebaceous gland cells of the outer ear (at protein level). Abundantly expressed in vibrissae hair follicles and weakly expressed in the vibrissae skin pad, dorsal back skin, and tail.

The protein localises to the cell membrane. G-protein coupled receptor which selectively activates G(i) type G proteins via ultraviolet A (UVA) light-mediated activation in the retina. Preferentially binds the chromophore 11-cis retinal and is a bistable protein that displays emission peaks at 380 nm (UVA light) and 470 nm (blue light). Required for the light-response in the inner plexiform layer, and contributes to the regulation of the light-response in the nerve fiber layer, via phosphorylated DAT/SLC6A3 dopamine uptake. Involved in local corneal and retinal circadian rhythm photoentrainment via modulation of the UVA light-induced phase-shift of the retina clock. Acts as a circadian photoreceptor in the outer ear and vibrissal pads, via modulation of circadian clock-gene expression in response to violet light during the light-to-dark transition phase and night phase of the circadian cycle. Required in the retina to negatively regulate hyaloid vessel regression during postnatal development via light-dependent OPN5-SLC32A1-DRD2-VEGFR2 signaling. Involved in the light-dependent regulation of retina and vitreous compartment dopamine levels. This Mus musculus (Mouse) protein is Opsin-5 (Opn5).